The chain runs to 447 residues: SNF1-related protein kinase regulatory subunit gamma-1-like (447 aa).

Position 2 is an N-acetylalanine (Ala2). The residue at position 35 (Ser35) is a Phosphoserine. 4 CBS domains span residues 54 to 120 (QVPG…SAEL), 214 to 275 (SFRW…GRDW), 292 to 350 (MSPN…PEVF), and 374 to 433 (LAIP…PNYF).

The protein belongs to the 5'-AMP-activated protein kinase gamma subunit family. As to quaternary structure, subunit of a probable heterotrimeric complex consisting of an alpha catalytic (KIN10 or KIN11) subunit, and a beta (KINB) and a gamma (KING or SNF4) non-catalytic regulatory subunits.

Its function is as follows. Regulatory subunit of the probable trimeric SNF1-related protein kinase (SnRK) complex, which may play a role in a signal transduction cascade regulating gene expression and carbohydrate metabolism in higher plants. The polypeptide is SNF1-related protein kinase regulatory subunit gamma-1-like (CBSCBS2) (Arabidopsis thaliana (Mouse-ear cress)).